A 106-amino-acid polypeptide reads, in one-letter code: Toxin-like structure LSTX-D4 (106 aa).

Residues 1 to 20 (MMKVLVVVALLVTLISYSSS) form the signal peptide. The propeptide occupies 21-41 (EGIGDLEADELLSLMANEQTR). 4 disulfides stabilise this stretch: Cys45-Cys60, Cys52-Cys69, Cys59-Cys85, and Cys71-Cys83.

Belongs to the neurotoxin 19 (CSTX) family. 02 (D7) subfamily. Expressed by the venom gland.

The protein resides in the secreted. In Lycosa singoriensis (Wolf spider), this protein is Toxin-like structure LSTX-D4.